We begin with the raw amino-acid sequence, 429 residues long: Glucose-1-phosphate adenylyltransferase (429 aa).

Residues G162, 177–178 (EK), and S209 contribute to the alpha-D-glucose 1-phosphate site.

This sequence belongs to the bacterial/plant glucose-1-phosphate adenylyltransferase family. As to quaternary structure, homotetramer.

It carries out the reaction alpha-D-glucose 1-phosphate + ATP + H(+) = ADP-alpha-D-glucose + diphosphate. The protein operates within glycan biosynthesis; glycogen biosynthesis. Functionally, involved in the biosynthesis of ADP-glucose, a building block required for the elongation reactions to produce glycogen. Catalyzes the reaction between ATP and alpha-D-glucose 1-phosphate (G1P) to produce pyrophosphate and ADP-Glc. The chain is Glucose-1-phosphate adenylyltransferase from Trichormus variabilis (strain ATCC 29413 / PCC 7937) (Anabaena variabilis).